The chain runs to 268 residues: Undecaprenyl-diphosphatase (268 aa).

7 helical membrane passes run 5-25, 43-63, 84-104, 107-127, 184-204, 214-234, and 247-267; these read TIAQALMLGVLEGFTEFIPVS, GKAFEILIQLGAILAVLSVYA, LGILIAFLPAAIIGVVAYQII, VLFETPLLICTMLILGGIVLL, AAEFSFFLAMPTMAGAFAYDL, ADLQIIGVGFIAAFVAAVLVV, and ALFGWWRIFIGVLGLIGVLVL.

Belongs to the UppP family.

The protein resides in the cell inner membrane. It carries out the reaction di-trans,octa-cis-undecaprenyl diphosphate + H2O = di-trans,octa-cis-undecaprenyl phosphate + phosphate + H(+). Functionally, catalyzes the dephosphorylation of undecaprenyl diphosphate (UPP). Confers resistance to bacitracin. This Chelativorans sp. (strain BNC1) protein is Undecaprenyl-diphosphatase.